We begin with the raw amino-acid sequence, 216 residues long: Cell division protein SepF (216 aa).

A disordered region spans residues 22–126 (EYVEEPDQAR…PVVDDGGPLA (105 aa)). 3 stretches are compositionally biased toward basic and acidic residues: residues 28 to 50 (DQAR…REFV), 62 to 80 (SRRD…RPRV), and 106 to 118 (ARAE…RAPV).

Belongs to the SepF family. As to quaternary structure, homodimer. Interacts with FtsZ.

It localises to the cytoplasm. Cell division protein that is part of the divisome complex and is recruited early to the Z-ring. Probably stimulates Z-ring formation, perhaps through the cross-linking of FtsZ protofilaments. Its function overlaps with FtsA. The protein is Cell division protein SepF of Rhodococcus erythropolis (strain PR4 / NBRC 100887).